We begin with the raw amino-acid sequence, 641 residues long: 1-deoxy-D-xylulose-5-phosphate synthase (641 aa).

Residues His79 and 120–122 contribute to the thiamine diphosphate site; that span reads AHS. Asp151 provides a ligand contact to Mg(2+). Residues 152–153, Asn180, Tyr290, and Glu372 contribute to the thiamine diphosphate site; that span reads GA. Mg(2+) is bound at residue Asn180.

Belongs to the transketolase family. DXPS subfamily. As to quaternary structure, homodimer. The cofactor is Mg(2+). Requires thiamine diphosphate as cofactor.

It carries out the reaction D-glyceraldehyde 3-phosphate + pyruvate + H(+) = 1-deoxy-D-xylulose 5-phosphate + CO2. It functions in the pathway metabolic intermediate biosynthesis; 1-deoxy-D-xylulose 5-phosphate biosynthesis; 1-deoxy-D-xylulose 5-phosphate from D-glyceraldehyde 3-phosphate and pyruvate: step 1/1. Its function is as follows. Catalyzes the acyloin condensation reaction between C atoms 2 and 3 of pyruvate and glyceraldehyde 3-phosphate to yield 1-deoxy-D-xylulose-5-phosphate (DXP). The polypeptide is 1-deoxy-D-xylulose-5-phosphate synthase (Bradyrhizobium sp. (strain ORS 278)).